The primary structure comprises 118 residues: Ribulose bisphosphate carboxylase small subunit 2 (118 aa).

The protein belongs to the RuBisCO small chain family. As to quaternary structure, heterohexadecamer of 8 large and 8 small subunits.

Its function is as follows. RuBisCO catalyzes two reactions: the carboxylation of D-ribulose 1,5-bisphosphate, the primary event in carbon dioxide fixation, as well as the oxidative fragmentation of the pentose substrate. Both reactions occur simultaneously and in competition at the same active site. Although the small subunit is not catalytic it is essential for maximal activity. This is Ribulose bisphosphate carboxylase small subunit 2 from Acidithiobacillus ferrooxidans (Thiobacillus ferrooxidans).